Here is a 446-residue protein sequence, read N- to C-terminus: Tryptophan dimethylallyltransferase (446 aa).

Residues 83-84 (IL) and Glu-92 each bind L-tryptophan. The substrate site is built by Arg-103, Lys-189, and Tyr-191. L-tryptophan contacts are provided by Tyr-193 and Arg-246. Substrate contacts are provided by Arg-259, Lys-261, Tyr-263, Gln-345, and Tyr-347.

The protein belongs to the tryptophan dimethylallyltransferase family. Homodimer.

It catalyses the reaction L-tryptophan + dimethylallyl diphosphate = 4-(3-methylbut-2-enyl)-L-tryptophan + diphosphate. The protein operates within alkaloid biosynthesis; ergot alkaloid biosynthesis. Tryptophan dimethylallyltransferase; part of the gene cluster that mediates the biosynthesis of fungal ergot alkaloid. DmaW catalyzes the first step of ergot alkaloid biosynthesis by condensing dimethylallyl diphosphate (DMAP) and tryptophan to form 4-dimethylallyl-L-tryptophan. The second step is catalyzed by the methyltransferase easF that methylates 4-dimethylallyl-L-tryptophan in the presence of S-adenosyl-L-methionine, resulting in the formation of 4-dimethylallyl-L-abrine. The catalase easC and the FAD-dependent oxidoreductase easE then transform 4-dimethylallyl-L-abrine to chanoclavine-I which is further oxidized by easD in the presence of NAD(+), resulting in the formation of chanoclavine-I aldehyde. Chanoclavine-I aldehyde is the precursor of ergoamides and ergopeptines in Clavicipitaceae, and clavine-type alcaloids such as fumiclavine in Trichocomaceae. However, the metabolites downstream of chanoclavine-I aldehyde in Arthrodermataceae have not been identified yet. The protein is Tryptophan dimethylallyltransferase of Arthroderma otae (strain ATCC MYA-4605 / CBS 113480) (Microsporum canis).